The following is a 333-amino-acid chain: Adenosine deaminase (333 aa).

His-12 and His-14 together coordinate Zn(2+). Residues His-14, Asp-16, and Gly-170 each contribute to the substrate site. His-197 serves as a coordination point for Zn(2+). The active-site Proton donor is Glu-200. Position 278 (Asp-278) interacts with Zn(2+). Residue Asp-279 coordinates substrate.

The protein belongs to the metallo-dependent hydrolases superfamily. Adenosine and AMP deaminases family. Adenosine deaminase subfamily. Zn(2+) is required as a cofactor.

It catalyses the reaction adenosine + H2O + H(+) = inosine + NH4(+). The catalysed reaction is 2'-deoxyadenosine + H2O + H(+) = 2'-deoxyinosine + NH4(+). In terms of biological role, catalyzes the hydrolytic deamination of adenosine and 2-deoxyadenosine. This Escherichia coli O157:H7 protein is Adenosine deaminase.